A 306-amino-acid polypeptide reads, in one-letter code: Homoserine O-acetyltransferase (306 aa).

Residue C142 is the Acyl-thioester intermediate of the active site. The substrate site is built by K163 and S192. The Proton acceptor role is filled by H235. E237 is a catalytic residue. Residue R249 coordinates substrate.

Belongs to the MetA family.

It is found in the cytoplasm. It catalyses the reaction L-homoserine + acetyl-CoA = O-acetyl-L-homoserine + CoA. It participates in amino-acid biosynthesis; L-methionine biosynthesis via de novo pathway; O-acetyl-L-homoserine from L-homoserine: step 1/1. Functionally, transfers an acetyl group from acetyl-CoA to L-homoserine, forming acetyl-L-homoserine. The sequence is that of Homoserine O-acetyltransferase from Brucella abortus (strain S19).